Reading from the N-terminus, the 362-residue chain is 3-dehydroquinate synthase (362 aa).

Residues 71–76, 105–109, 129–130, lysine 142, lysine 151, and 169–172 contribute to the NAD(+) site; these read DGEQYK, GVVGD, TT, and CLNT. Glutamate 184, histidine 247, and histidine 264 together coordinate Zn(2+).

The protein belongs to the sugar phosphate cyclases superfamily. Dehydroquinate synthase family. The cofactor is Co(2+). Requires Zn(2+) as cofactor. NAD(+) serves as cofactor.

The protein localises to the cytoplasm. The catalysed reaction is 7-phospho-2-dehydro-3-deoxy-D-arabino-heptonate = 3-dehydroquinate + phosphate. It participates in metabolic intermediate biosynthesis; chorismate biosynthesis; chorismate from D-erythrose 4-phosphate and phosphoenolpyruvate: step 2/7. In terms of biological role, catalyzes the conversion of 3-deoxy-D-arabino-heptulosonate 7-phosphate (DAHP) to dehydroquinate (DHQ). This chain is 3-dehydroquinate synthase, found in Enterobacter sp. (strain 638).